We begin with the raw amino-acid sequence, 191 residues long: uncharacterized protein (191 aa).

The next 6 membrane-spanning stretches (helical) occupy residues 4-24 (IYRQTIHLVFGVLIAFSVLIF), 26-46 (KQLIIPLIVSIVIGICLYFLC), 68-88 (GKGAIYFAIGMLISLILIDDI), 90-110 (AVFFGILVFAVGDSLATIIGI), 135-155 (LILYPFYGTYGIFVALISAFI), and 168-188 (LYLPFIVAFIINHQINICSLM).

It localises to the cell membrane. This is an uncharacterized protein from Methanocaldococcus jannaschii (strain ATCC 43067 / DSM 2661 / JAL-1 / JCM 10045 / NBRC 100440) (Methanococcus jannaschii).